A 556-amino-acid chain; its full sequence is Arginine--tRNA ligase (556 aa).

The short motif at 133 to 143 (ANPTGPIHIGH) is the 'HIGH' region element.

It belongs to the class-I aminoacyl-tRNA synthetase family. In terms of assembly, monomer.

It localises to the cytoplasm. It carries out the reaction tRNA(Arg) + L-arginine + ATP = L-arginyl-tRNA(Arg) + AMP + diphosphate. In Dehalococcoides mccartyi (strain ATCC BAA-2100 / JCM 16839 / KCTC 5957 / BAV1), this protein is Arginine--tRNA ligase.